A 562-amino-acid chain; its full sequence is Efflux pump apf11 (562 aa).

2 stretches are compositionally biased toward low complexity: residues 1–10 and 18–30; these read MGDISAATKA and TPET…SSDT. A disordered region spans residues 1 to 36; the sequence is MGDISAATKAPAPPTPATPETNTTSSSSDTDVQHEP. Asn-22 carries an N-linked (GlcNAc...) asparagine glycan. The next 8 helical transmembrane spans lie at 46-66, 83-103, 110-130, 141-161, 169-189, 200-220, 249-269, and 278-298; these read LVIF…TIVA, AWYG…FGKI, KLVF…CALA, AIAG…TALT, VYTA…PIIG, WCFW…VFCL, GGLA…WGGT, and IIVL…HQHW. A glycan (N-linked (GlcNAc...) asparagine) is linked at Asn-312. 6 helical membrane-spanning segments follow: residues 317–337, 356–376, 382–404, 414–434, 447–467, and 516–536; these read MFLL…YYLP, LAMV…AGAV, FVFF…HPSI, ILFG…VQVA, VMLV…TLFL, and FLIG…IRWI.

Belongs to the major facilitator superfamily. TCR/Tet family.

The protein resides in the membrane. It participates in secondary metabolite biosynthesis. In terms of biological role, efflux pump; part of the gene cluster that mediates the biosynthesis of the cyclic tetrapeptide apicidin F (APF). The sequence is that of Efflux pump apf11 (apf11) from Gibberella fujikuroi (strain CBS 195.34 / IMI 58289 / NRRL A-6831) (Bakanae and foot rot disease fungus).